Reading from the N-terminus, the 475-residue chain is Ubiquilin-like protein (475 aa).

In terms of domain architecture, Ubiquitin-like spans 31 to 105 (TRVIVKTAGN…IYLVIKSKQG (75 aa)). 2 disordered regions span residues 113 to 138 (FRDLPTNDPCHRDRNTKGNSSRVHQP) and 305 to 325 (QVQSSPPPPPPSQEQQDQLTQ). The span at 129–138 (KGNSSRVHQP) shows a compositional bias: polar residues.

This is Ubiquilin-like protein (UBQLNL) from Homo sapiens (Human).